The chain runs to 467 residues: Cysteine--tRNA ligase (467 aa).

Cys-29 provides a ligand contact to Zn(2+). The 'HIGH' region motif lies at 31 to 41 (PTVYDDSHLGH). The disordered stretch occupies residues 155–174 (KLSGRGEDLEQVSRIESSEE). Over residues 158 to 174 (GRGEDLEQVSRIESSEE) the composition is skewed to basic and acidic residues. The Zn(2+) site is built by Cys-210, His-239, and Glu-243. Positions 271–275 (KMSKS) match the 'KMSKS' region motif. Lys-274 contributes to the ATP binding site.

This sequence belongs to the class-I aminoacyl-tRNA synthetase family. As to quaternary structure, monomer. The cofactor is Zn(2+).

It localises to the cytoplasm. The catalysed reaction is tRNA(Cys) + L-cysteine + ATP = L-cysteinyl-tRNA(Cys) + AMP + diphosphate. In Wolinella succinogenes (strain ATCC 29543 / DSM 1740 / CCUG 13145 / JCM 31913 / LMG 7466 / NCTC 11488 / FDC 602W) (Vibrio succinogenes), this protein is Cysteine--tRNA ligase.